Here is a 977-residue protein sequence, read N- to C-terminus: Alanine--tRNA ligase (977 aa).

Residues 512-535 (SQVDSKLQSSTPAGTGSYDSKQVS) form a disordered region. Positions 618, 622, 720, and 724 each coordinate Zn(2+).

The protein belongs to the class-II aminoacyl-tRNA synthetase family. Requires Zn(2+) as cofactor.

Its subcellular location is the cytoplasm. The enzyme catalyses tRNA(Ala) + L-alanine + ATP = L-alanyl-tRNA(Ala) + AMP + diphosphate. Its function is as follows. Catalyzes the attachment of alanine to tRNA(Ala) in a two-step reaction: alanine is first activated by ATP to form Ala-AMP and then transferred to the acceptor end of tRNA(Ala). Also edits incorrectly charged Ser-tRNA(Ala) and Gly-tRNA(Ala) via its editing domain. This Leptospira interrogans serogroup Icterohaemorrhagiae serovar Lai (strain 56601) protein is Alanine--tRNA ligase.